A 441-amino-acid chain; its full sequence is Proline--tRNA ligase (441 aa).

This sequence belongs to the class-II aminoacyl-tRNA synthetase family. ProS type 2 subfamily. Homodimer.

The protein resides in the cytoplasm. It carries out the reaction tRNA(Pro) + L-proline + ATP = L-prolyl-tRNA(Pro) + AMP + diphosphate. In terms of biological role, catalyzes the attachment of proline to tRNA(Pro) in a two-step reaction: proline is first activated by ATP to form Pro-AMP and then transferred to the acceptor end of tRNA(Pro). The chain is Proline--tRNA ligase from Afipia carboxidovorans (strain ATCC 49405 / DSM 1227 / KCTC 32145 / OM5) (Oligotropha carboxidovorans).